Consider the following 552-residue polypeptide: Arginine--tRNA ligase (552 aa).

Positions 123–133 (ANPTGPLTIGR) match the 'HIGH' region motif.

This sequence belongs to the class-I aminoacyl-tRNA synthetase family. As to quaternary structure, monomer.

Its subcellular location is the cytoplasm. It catalyses the reaction tRNA(Arg) + L-arginine + ATP = L-arginyl-tRNA(Arg) + AMP + diphosphate. The protein is Arginine--tRNA ligase of Chlorobium luteolum (strain DSM 273 / BCRC 81028 / 2530) (Pelodictyon luteolum).